The primary structure comprises 347 residues: Anthranilate phosphoribosyltransferase (347 aa).

5-phospho-alpha-D-ribose 1-diphosphate contacts are provided by residues glycine 82, 85–86 (GD), threonine 90, 92–95 (NIST), 110–118 (KHGNRAITS), and threonine 122. Glycine 82 contributes to the anthranilate binding site. Residue serine 94 participates in Mg(2+) binding. Position 113 (asparagine 113) interacts with anthranilate. Arginine 168 lines the anthranilate pocket. Residues aspartate 226 and glutamate 227 each coordinate Mg(2+).

It belongs to the anthranilate phosphoribosyltransferase family. In terms of assembly, homodimer. Mg(2+) serves as cofactor.

It carries out the reaction N-(5-phospho-beta-D-ribosyl)anthranilate + diphosphate = 5-phospho-alpha-D-ribose 1-diphosphate + anthranilate. Its pathway is amino-acid biosynthesis; L-tryptophan biosynthesis; L-tryptophan from chorismate: step 2/5. Catalyzes the transfer of the phosphoribosyl group of 5-phosphorylribose-1-pyrophosphate (PRPP) to anthranilate to yield N-(5'-phosphoribosyl)-anthranilate (PRA). The chain is Anthranilate phosphoribosyltransferase from Caulobacter sp. (strain K31).